A 348-amino-acid chain; its full sequence is Terpene cyclase ctvD (348 aa).

The helical transmembrane segment at 2–22 (ALSAYFLLCLSVLGLDAIYGF) threads the bilayer. Asn-51 is a glycosylation site (N-linked (GlcNAc...) asparagine). The next 7 helical transmembrane spans lie at 77–97 (PGLSLQAFHFLGAIVAVWVAI), 116–136 (LFAMLSQVVAIAVIVPLWCAI), 161–181 (LIPISMVLGFGIPTIGMLLPE), 191–211 (QIAIAVWQIWPIYVALWHWGL), 235–255 (FAFVCAIIPHAVSWGLSLTLI), 283–303 (GLWFLQWDHLIGMGSFLLWAM), and 323–343 (LKVGVLCLISGPCGAAVWLLW).

The protein belongs to the membrane-bound ascI terpene cyclase family.

It is found in the membrane. Its pathway is mycotoxin biosynthesis. Hydrolase; part of the gene cluster that mediates the biosynthesis of citreoviridin, an inhibitor of the of F1-ATPase beta-subunit. The HR-PKS ctvA accepts acetyl-CoA as the starter unit and catalyzes eight iterations of malonyl-CoA extension and four iterations of SAM-dependent methylation at C4, C12, C14, and C16. The KR and DH domains selectively act on the first six iterations to generate the hexaene chain. In the last three iterations, the KR and DH domains terminate their functions to yield a beta,delta-diketo ester moiety, which then undergoes intramolecular cyclization to yield an alpha-pyrone intermediate. Subsequently, ctvB methylates the alpha-pyrone hydroxyl group to generate citreomontanin. In order to form the tetrahydrofuran ring with the correct stereochemistry, the terminal alkenes of citreomontanin need to undergo isomerization to yield a (17Z)-hexaene, a step that could be catalyzed by ctvC. The (17Z)-hexaene then undergoes bisepoxidation by ctvC to form a (17R,16R,15S,14R)-bisepoxide moiety. Lastly, ctvD acts as a regioselective hydrolase to form the tetrahydrofuran ring with the substituents in the correct absolute configuration, completing the biosynthesis of citreoviridin. The polypeptide is Terpene cyclase ctvD (Aspergillus terreus (strain NIH 2624 / FGSC A1156)).